The primary structure comprises 539 residues: Membrane protein insertase YidC (539 aa).

5 helical membrane passes run 6-26 (TLLV…WQVA), 341-361 (SVIQ…TFIV), 416-436 (LGGC…YWAL), 454-474 (LSAQ…MFLI), and 495-515 (PVMF…YWLV).

Belongs to the OXA1/ALB3/YidC family. Type 1 subfamily. In terms of assembly, interacts with the Sec translocase complex via SecD. Specifically interacts with transmembrane segments of nascent integral membrane proteins during membrane integration.

The protein resides in the cell inner membrane. Required for the insertion and/or proper folding and/or complex formation of integral membrane proteins into the membrane. Involved in integration of membrane proteins that insert both dependently and independently of the Sec translocase complex, as well as at least some lipoproteins. Aids folding of multispanning membrane proteins. The sequence is that of Membrane protein insertase YidC from Vibrio vulnificus (strain YJ016).